Reading from the N-terminus, the 227-residue chain is Cytochrome c oxidase subunit 2 (227 aa).

The Mitochondrial intermembrane segment spans residues 1-14; that stretch reads MAYPMQLGFQDATS. The helical transmembrane segment at 15-45 threads the bilayer; it reads PIMEELLHFHDHTLMIVFLISSLVLYIISLM. Topologically, residues 46 to 59 are mitochondrial matrix; sequence LTTKLTHTSTMDAQ. Residues 60-87 form a helical membrane-spanning segment; it reads EVETVWTILPAVILIMIALPSLRILYMM. At 88–227 the chain is on the mitochondrial intermembrane side; it reads DEINNPSLTV…HFEKWSASML (140 aa). Cu cation contacts are provided by histidine 161, cysteine 196, glutamate 198, cysteine 200, histidine 204, and methionine 207. Residue glutamate 198 coordinates Mg(2+).

It belongs to the cytochrome c oxidase subunit 2 family. As to quaternary structure, component of the cytochrome c oxidase (complex IV, CIV), a multisubunit enzyme composed of 14 subunits. The complex is composed of a catalytic core of 3 subunits MT-CO1, MT-CO2 and MT-CO3, encoded in the mitochondrial DNA, and 11 supernumerary subunits COX4I, COX5A, COX5B, COX6A, COX6B, COX6C, COX7A, COX7B, COX7C, COX8 and NDUFA4, which are encoded in the nuclear genome. The complex exists as a monomer or a dimer and forms supercomplexes (SCs) in the inner mitochondrial membrane with NADH-ubiquinone oxidoreductase (complex I, CI) and ubiquinol-cytochrome c oxidoreductase (cytochrome b-c1 complex, complex III, CIII), resulting in different assemblies (supercomplex SCI(1)III(2)IV(1) and megacomplex MCI(2)III(2)IV(2)). Found in a complex with TMEM177, COA6, COX18, COX20, SCO1 and SCO2. Interacts with TMEM177 in a COX20-dependent manner. Interacts with COX20. Interacts with COX16. Requires Cu cation as cofactor.

The protein resides in the mitochondrion inner membrane. It catalyses the reaction 4 Fe(II)-[cytochrome c] + O2 + 8 H(+)(in) = 4 Fe(III)-[cytochrome c] + 2 H2O + 4 H(+)(out). Its function is as follows. Component of the cytochrome c oxidase, the last enzyme in the mitochondrial electron transport chain which drives oxidative phosphorylation. The respiratory chain contains 3 multisubunit complexes succinate dehydrogenase (complex II, CII), ubiquinol-cytochrome c oxidoreductase (cytochrome b-c1 complex, complex III, CIII) and cytochrome c oxidase (complex IV, CIV), that cooperate to transfer electrons derived from NADH and succinate to molecular oxygen, creating an electrochemical gradient over the inner membrane that drives transmembrane transport and the ATP synthase. Cytochrome c oxidase is the component of the respiratory chain that catalyzes the reduction of oxygen to water. Electrons originating from reduced cytochrome c in the intermembrane space (IMS) are transferred via the dinuclear copper A center (CU(A)) of subunit 2 and heme A of subunit 1 to the active site in subunit 1, a binuclear center (BNC) formed by heme A3 and copper B (CU(B)). The BNC reduces molecular oxygen to 2 water molecules using 4 electrons from cytochrome c in the IMS and 4 protons from the mitochondrial matrix. The polypeptide is Cytochrome c oxidase subunit 2 (MT-CO2) (Tragelaphus imberbis (Lesser kudu)).